A 56-amino-acid polypeptide reads, in one-letter code: MANIKAGKERTKIFGRGSHECLLCGRKQGLVRRYNIFFCRQCFREWAPKMGFKKLN.

Zn(2+)-binding residues include C21, C24, C39, and C42.

Belongs to the universal ribosomal protein uS14 family. Zinc-binding uS14 subfamily. Part of the 30S ribosomal subunit. Zn(2+) is required as a cofactor.

Its function is as follows. Binds 16S rRNA, required for the assembly of 30S particles. The chain is Small ribosomal subunit protein uS14 from Methanospirillum hungatei JF-1 (strain ATCC 27890 / DSM 864 / NBRC 100397 / JF-1).